Here is a 156-residue protein sequence, read N- to C-terminus: Protein US1 (156 aa).

Disordered regions lie at residues 90–114 (RSRSRTAESGRSSSSSSVSVLSDGD) and 133–156 (ARRWTQRHDSEERASQQAKNDSTS). Positions 96–111 (AESGRSSSSSSVSVLS) are enriched in low complexity. Polar residues predominate over residues 147 to 156 (SQQAKNDSTS).

The polypeptide is Protein US1 (US1) (Homo sapiens (Human)).